Consider the following 863-residue polypeptide: Major vault protein (863 aa).

9 MVP repeats span residues 2-60 (DADH…VPPR), 61-115 (HYCV…DVTP), 116-168 (LQIV…EVIK), 169-221 (ATVI…DIVS), 222-276 (AFIL…GVVD), 277-327 (VTTL…IQDV), 328-396 (YVLS…TRTA), 397-471 (IPLD…KTRV), and 472-534 (VSYR…LLGP). The segment at 349–368 (GDEAEEEERESRAKKRGVQR) is disordered. The IQ domain maps to 677–706 (ARHEAERLEQEARGRLERQKITDQAEAEKA).

As to quaternary structure, the vault ribonucleoprotein particle is a huge (400 A x 670 A) cage structure of 12.9 MDa. It consists of a dimer of half-vaults, with each half-vault comprising 39 identical major vault protein (MVP) chains, PARP4 and one or more vault RNAs (vRNAs).

It is found in the cytoplasm. The protein localises to the nucleus. Required for normal vault structure. Vaults are multi-subunit structures that may act as scaffolds for proteins involved in signal transduction. Vaults may also play a role in nucleo-cytoplasmic transport. The sequence is that of Major vault protein (mvp) from Danio rerio (Zebrafish).